The sequence spans 481 residues: 3-isopropylmalate dehydratase large subunit (481 aa).

Positions 357, 417, and 420 each coordinate [4Fe-4S] cluster.

Belongs to the aconitase/IPM isomerase family. LeuC type 1 subfamily. Heterodimer of LeuC and LeuD. It depends on [4Fe-4S] cluster as a cofactor.

The catalysed reaction is (2R,3S)-3-isopropylmalate = (2S)-2-isopropylmalate. Its pathway is amino-acid biosynthesis; L-leucine biosynthesis; L-leucine from 3-methyl-2-oxobutanoate: step 2/4. Catalyzes the isomerization between 2-isopropylmalate and 3-isopropylmalate, via the formation of 2-isopropylmaleate. The sequence is that of 3-isopropylmalate dehydratase large subunit from Mycolicibacterium gilvum (strain PYR-GCK) (Mycobacterium gilvum (strain PYR-GCK)).